The primary structure comprises 130 residues: Small ribosomal subunit protein uS8y (130 aa).

This sequence belongs to the universal ribosomal protein uS8 family.

In Arabidopsis thaliana (Mouse-ear cress), this protein is Small ribosomal subunit protein uS8y (RPS15AC).